A 293-amino-acid chain; its full sequence is Methylsterol monooxygenase 1 (293 aa).

A run of 2 helical transmembrane segments spans residues 55-75 and 100-120; these read LIVH…FQFI and VLLF…YYFT. The 130-residue stretch at 145–274 folds into the Fatty acid hydroxylase domain; that stretch reads CAVIEDTWHY…FTWWDRIFGT (130 aa). Positions 157–161 match the Histidine box-1 motif; the sequence is HRLLH. The Histidine box-2 signature appears at 170 to 174; that stretch reads HKVHH. The helical transmembrane segment at 199 to 219 threads the bilayer; the sequence is FFIGIVLLCDHVILLWAWVTI. Residues 249–255 carry the Histidine box-3 motif; it reads HHDFHHM.

It belongs to the sterol desaturase family. Fe cation serves as cofactor. In terms of processing, ubiquitinated by MARCHF6, leading to proteasomal degradation.

The protein resides in the endoplasmic reticulum membrane. The enzyme catalyses 4,4-dimethyl-5alpha-cholest-7-en-3beta-ol + 6 Fe(II)-[cytochrome b5] + 3 O2 + 5 H(+) = 4alpha-carboxy-4beta-methyl-5alpha-cholest-7-ene-3beta-ol + 6 Fe(III)-[cytochrome b5] + 4 H2O. The catalysed reaction is 4,4-dimethyl-5alpha-cholesta-8,24-dien-3beta-ol + 6 Fe(II)-[cytochrome b5] + 3 O2 + 5 H(+) = 4beta-methylzymosterol-4alpha-carboxylate + 6 Fe(III)-[cytochrome b5] + 4 H2O. It carries out the reaction 4alpha-methylzymosterol + 6 Fe(II)-[cytochrome b5] + 3 O2 + 5 H(+) = 4alpha-carboxyzymosterol + 6 Fe(III)-[cytochrome b5] + 4 H2O. It catalyses the reaction 4alpha-methyl-5alpha-cholest-7-en-3beta-ol + 6 Fe(II)-[cytochrome b5] + 3 O2 + 5 H(+) = 4alpha-carboxy-5alpha-cholest-7-en-3beta-ol + 6 Fe(III)-[cytochrome b5] + 4 H2O. The enzyme catalyses 4,4-dimethyl-5alpha-cholest-8-en-3beta-ol + 6 Fe(II)-[cytochrome b5] + 3 O2 + 5 H(+) = 4alpha-carboxy-4beta-methyl-5alpha-cholest-8-en-3beta-ol + 6 Fe(III)-[cytochrome b5] + 4 H2O. The catalysed reaction is 4alpha-methyl-5alpha-cholest-8-en-3beta-ol + 6 Fe(II)-[cytochrome b5] + 3 O2 + 5 H(+) = 4alpha-carboxy-5alpha-cholest-8-ene-3beta-ol + 6 Fe(III)-[cytochrome b5] + 4 H2O. The protein operates within steroid biosynthesis; zymosterol biosynthesis; zymosterol from lanosterol: step 3/6. It functions in the pathway steroid biosynthesis; cholesterol biosynthesis. Catalyzes the three-step monooxygenation required for the demethylation of 4,4-dimethyl and 4alpha-methylsterols, which can be subsequently metabolized to cholesterol. This Pongo abelii (Sumatran orangutan) protein is Methylsterol monooxygenase 1 (MSMO1).